We begin with the raw amino-acid sequence, 104 residues long: A-type ATP synthase subunit F (104 aa).

It belongs to the V-ATPase F subunit family. In terms of assembly, has multiple subunits with at least A(3), B(3), C, D, E, F, H, I and proteolipid K(x).

The protein resides in the cell membrane. Functionally, component of the A-type ATP synthase that produces ATP from ADP in the presence of a proton gradient across the membrane. The polypeptide is A-type ATP synthase subunit F (Thermoplasma acidophilum (strain ATCC 25905 / DSM 1728 / JCM 9062 / NBRC 15155 / AMRC-C165)).